We begin with the raw amino-acid sequence, 264 residues long: uncharacterized protein (264 aa).

Residues 7-27 traverse the membrane as a helical segment; it reads LTLGICLVLLIILIVGYVIMT.

The protein belongs to the staphylococcal tandem lipoprotein family.

Its subcellular location is the cell membrane. This is an uncharacterized protein from Staphylococcus aureus (strain NCTC 8325 / PS 47).